The following is an 86-amino-acid chain: Small ribosomal subunit protein bS20 (86 aa).

Belongs to the bacterial ribosomal protein bS20 family.

Binds directly to 16S ribosomal RNA. In Rhodococcus erythropolis (strain PR4 / NBRC 100887), this protein is Small ribosomal subunit protein bS20.